A 539-amino-acid chain; its full sequence is Propionyl-CoA carboxylase beta chain, mitochondrial (539 aa).

A mitochondrion-targeting transit peptide spans 1–28 (MAAALRVAAVGARLSVLASGLRAAVRSL). Residues 32–290 (ATSVNERIEN…SSQDPAPVRE (259 aa)) enclose the CoA carboxyltransferase N-terminal domain. Residues 32–533 (ATSVNERIEN…SKKVQRPWRK (502 aa)) are carboxyltransferase. A Phosphoserine modification is found at S71. K99 carries the post-translational modification N6-acetyllysine; alternate. K99 carries the N6-succinyllysine; alternate modification. The residue at position 248 (K248) is an N6-succinyllysine. The CoA carboxyltransferase C-terminal domain occupies 294-533 (PSDRLVPELD…SKKVQRPWRK (240 aa)). Positions 325–358 (DEREFFEIMPNYAKNIIVGFARMNGRTVGIVGNQ) are acyl-CoA binding. N6-acetyllysine; alternate is present on residues K474 and K489. 2 positions are modified to N6-succinyllysine; alternate: K474 and K489.

It belongs to the AccD/PCCB family. The holoenzyme is a dodecamer composed of 6 PCCA/alpha subunits and 6 PCCB/beta subunits.

The protein resides in the mitochondrion matrix. It carries out the reaction propanoyl-CoA + hydrogencarbonate + ATP = (S)-methylmalonyl-CoA + ADP + phosphate + H(+). The catalysed reaction is butanoyl-CoA + hydrogencarbonate + ATP = (2S)-ethylmalonyl-CoA + ADP + phosphate + H(+). It participates in metabolic intermediate metabolism; propanoyl-CoA degradation; succinyl-CoA from propanoyl-CoA: step 1/3. Its function is as follows. This is one of the 2 subunits of the biotin-dependent propionyl-CoA carboxylase (PCC), a mitochondrial enzyme involved in the catabolism of odd chain fatty acids, branched-chain amino acids isoleucine, threonine, methionine, and valine and other metabolites. Propionyl-CoA carboxylase catalyzes the carboxylation of propionyl-CoA/propanoyl-CoA to D-methylmalonyl-CoA/(S)-methylmalonyl-CoA. Within the holoenzyme, the alpha subunit catalyzes the ATP-dependent carboxylation of the biotin carried by the biotin carboxyl carrier (BCC) domain, while the beta subunit then transfers the carboxyl group from carboxylated biotin to propionyl-CoA. Propionyl-CoA carboxylase also significantly acts on butyryl-CoA/butanoyl-CoA, which is converted to ethylmalonyl-CoA/(2S)-ethylmalonyl-CoA at a much lower rate. Other alternative minor substrates include (2E)-butenoyl-CoA/crotonoyl-CoA. This is Propionyl-CoA carboxylase beta chain, mitochondrial from Homo sapiens (Human).